The sequence spans 887 residues: Bifunctional uridylyltransferase/uridylyl-removing enzyme (887 aa).

The uridylyltransferase stretch occupies residues methionine 1–glutamate 337. The interval valine 339–valine 699 is uridylyl-removing. In terms of domain architecture, HD spans valine 457–leucine 579. ACT domains follow at residues glutamine 700–arginine 782 and methionine 809–histidine 887.

The protein belongs to the GlnD family. The cofactor is Mg(2+).

It catalyses the reaction [protein-PII]-L-tyrosine + UTP = [protein-PII]-uridylyl-L-tyrosine + diphosphate. The enzyme catalyses [protein-PII]-uridylyl-L-tyrosine + H2O = [protein-PII]-L-tyrosine + UMP + H(+). Its activity is regulated as follows. Uridylyltransferase (UTase) activity is inhibited by glutamine, while glutamine activates uridylyl-removing (UR) activity. In terms of biological role, modifies, by uridylylation and deuridylylation, the PII regulatory proteins (GlnB and homologs), in response to the nitrogen status of the cell that GlnD senses through the glutamine level. Under low glutamine levels, catalyzes the conversion of the PII proteins and UTP to PII-UMP and PPi, while under higher glutamine levels, GlnD hydrolyzes PII-UMP to PII and UMP (deuridylylation). Thus, controls uridylylation state and activity of the PII proteins, and plays an important role in the regulation of nitrogen assimilation and metabolism. The sequence is that of Bifunctional uridylyltransferase/uridylyl-removing enzyme from Acinetobacter baumannii (strain ATCC 17978 / DSM 105126 / CIP 53.77 / LMG 1025 / NCDC KC755 / 5377).